The sequence spans 183 residues: Gamma-crystallin N-B (183 aa).

Beta/gamma crystallin 'Greek key' domains follow at residues 6–46, 47–89, 95–136, and 138–180; these read GKIC…RVES, GAWI…RPIR, YRME…RVFG, and GAWV…RRIV.

This sequence belongs to the beta/gamma-crystallin family. As to quaternary structure, monomer.

Its function is as follows. Crystallins are the dominant structural components of the vertebrate eye lens. The protein is Gamma-crystallin N-B (crygnb) of Danio rerio (Zebrafish).